The following is a 471-amino-acid chain: ATP synthase subunit beta (471 aa).

An ATP-binding site is contributed by 153-160 (GGAGVGKT).

It belongs to the ATPase alpha/beta chains family. As to quaternary structure, F-type ATPases have 2 components, CF(1) - the catalytic core - and CF(0) - the membrane proton channel. CF(1) has five subunits: alpha(3), beta(3), gamma(1), delta(1), epsilon(1). CF(0) has three main subunits: a(1), b(2) and c(9-12). The alpha and beta chains form an alternating ring which encloses part of the gamma chain. CF(1) is attached to CF(0) by a central stalk formed by the gamma and epsilon chains, while a peripheral stalk is formed by the delta and b chains.

It localises to the cell membrane. It carries out the reaction ATP + H2O + 4 H(+)(in) = ADP + phosphate + 5 H(+)(out). In terms of biological role, produces ATP from ADP in the presence of a proton gradient across the membrane. The catalytic sites are hosted primarily by the beta subunits. In Levilactobacillus brevis (strain ATCC 367 / BCRC 12310 / CIP 105137 / JCM 1170 / LMG 11437 / NCIMB 947 / NCTC 947) (Lactobacillus brevis), this protein is ATP synthase subunit beta.